A 901-amino-acid polypeptide reads, in one-letter code: Protein translocase subunit SecA (901 aa).

ATP contacts are provided by residues Q89, 107–111 (GEGKT), and D502. The Zn(2+) site is built by C884, C886, C895, and H896.

Belongs to the SecA family. In terms of assembly, monomer and homodimer. Part of the essential Sec protein translocation apparatus which comprises SecA, SecYEG and auxiliary proteins SecDF-YajC and YidC. Zn(2+) serves as cofactor.

The protein localises to the cell inner membrane. It is found in the cytoplasm. It carries out the reaction ATP + H2O + cellular proteinSide 1 = ADP + phosphate + cellular proteinSide 2.. Its function is as follows. Part of the Sec protein translocase complex. Interacts with the SecYEG preprotein conducting channel. Has a central role in coupling the hydrolysis of ATP to the transfer of proteins into and across the cell membrane, serving both as a receptor for the preprotein-SecB complex and as an ATP-driven molecular motor driving the stepwise translocation of polypeptide chains across the membrane. This Sinorhizobium fredii (strain NBRC 101917 / NGR234) protein is Protein translocase subunit SecA.